The following is a 987-amino-acid chain: uncharacterized protein (987 aa).

The next 2 membrane-spanning stretches (helical) occupy residues 12-32 (FIYL…SVSG) and 958-978 (VENN…LGIL).

It to M.jannaschii MJ1393 and A.fulgidus AF2028.

Its subcellular location is the cell membrane. This is an uncharacterized protein from Methanocaldococcus jannaschii (strain ATCC 43067 / DSM 2661 / JAL-1 / JCM 10045 / NBRC 100440) (Methanococcus jannaschii).